A 402-amino-acid chain; its full sequence is N-acetyltransferase Eis (402 aa).

Residues Val3–Pro154 enclose the N-acetyltransferase domain. Acetyl-CoA contacts are provided by residues Val85–Val87, Arg93–Arg98, and Ser121–Glu122. The Proton donor role is filled by Tyr126. Phe402 serves as the catalytic Proton acceptor; via carboxylate.

The protein belongs to the acetyltransferase Eis family. As to quaternary structure, homohexamer; trimer of dimers.

Its subcellular location is the secreted. The protein resides in the host cytoplasmic vesicle. The protein localises to the host phagosome. It localises to the extracellular vesicle. It is found in the bacterial extracellular vesicle. Its subcellular location is the host extracellular space. The enzyme catalyses L-lysyl-[protein] + acetyl-CoA = N(6)-acetyl-L-lysyl-[protein] + CoA + H(+). Its function is as follows. Effector that is released into the host cell and affects host immune responses. Acts as an acetyltransferase that acetylates lysine residues of host proteins. The protein is N-acetyltransferase Eis of Mycobacterium bovis (strain ATCC BAA-935 / AF2122/97).